Consider the following 621-residue polypeptide: Chaperone protein HtpG (621 aa).

Residues M1 to R328 form an a; substrate-binding region. Positions E329–R544 are b. The interval S475–K495 is disordered. The segment covering S486–K495 has biased composition (basic and acidic residues). Positions F545–L621 are c.

This sequence belongs to the heat shock protein 90 family. As to quaternary structure, homodimer.

The protein localises to the cytoplasm. Its function is as follows. Molecular chaperone. Has ATPase activity. The sequence is that of Chaperone protein HtpG from Rickettsia akari (strain Hartford).